A 353-amino-acid chain; its full sequence is uncharacterized protein (353 aa).

This is an uncharacterized protein from Caenorhabditis elegans.